The sequence spans 253 residues: 3-dehydroquinate dehydratase (253 aa).

3-dehydroquinate is bound by residues 46-48 and arginine 82; that span reads EFR. Catalysis depends on histidine 143, which acts as the Proton donor/acceptor. Lysine 170 (schiff-base intermediate with substrate) is an active-site residue. Residues arginine 213, serine 232, and glutamine 236 each coordinate 3-dehydroquinate.

It belongs to the type-I 3-dehydroquinase family. In terms of assembly, homodimer.

It catalyses the reaction 3-dehydroquinate = 3-dehydroshikimate + H2O. Its pathway is metabolic intermediate biosynthesis; chorismate biosynthesis; chorismate from D-erythrose 4-phosphate and phosphoenolpyruvate: step 3/7. In terms of biological role, involved in the third step of the chorismate pathway, which leads to the biosynthesis of aromatic amino acids. Catalyzes the cis-dehydration of 3-dehydroquinate (DHQ) and introduces the first double bond of the aromatic ring to yield 3-dehydroshikimate. In Clostridium novyi (strain NT), this protein is 3-dehydroquinate dehydratase.